An 876-amino-acid chain; its full sequence is GRB2-associated and regulator of MAPK protein 1 (876 aa).

The tract at residues 12 to 320 (KDVKWSSVAV…HLVKGESWPE (309 aa)) is CABIT. Residues Tyr105 and Tyr453 each carry the phosphotyrosine modification. The interval 496 to 572 (IPGTLGAAVK…SPSPTLSYYS (77 aa)) is disordered. The necessary for interaction with GRB2 stretch occupies residues 498–550 (GTLGAAVKSSDTALPPPPVPPKSEAVREECRLLNAPPVPPRSAKPLSTSPSIP). Polar residues predominate over residues 558–572 (RQQTRSPSPTLSYYS). 2 positions are modified to phosphoserine: Ser610 and Ser614. Disordered regions lie at residues 626–664 (WPNH…PKRN) and 738–763 (ASET…PDLS). Composition is skewed to polar residues over residues 631 to 640 (SGASESQTRS) and 648 to 658 (RSYSYPRQKTP). Residues 811–876 (LSIEEVSKSL…QFINGWRPKI (66 aa)) enclose the SAM domain.

Belongs to the GAREM family. Isoform 1 interacts with EGFR. Isoform 1 interacts (via proline-rich domain and phosphorylated at Tyr-105 and Tyr-453) with GRB2 (via SH3 domains); the interaction occurs upon EGF stimulation. Isoform 1 interacts (phosphorylated at Tyr-453) with PTPN11; the interaction increases MAPK/ERK activity and does not affect the GRB2/SOS complex formation. Isoform 2 does not interact with GRB2. In terms of processing, on EGF stimulation, phosphorylated on Tyr-105 and Tyr-453. Isoform 1 is ubiquitously expressed.

Its function is as follows. Acts as an adapter protein that plays a role in intracellular signaling cascades triggered either by the cell surface activated epidermal growth factor receptor and/or cytoplasmic protein tyrosine kinases. Promotes activation of the MAPK/ERK signaling pathway. Plays a role in the regulation of cell proliferation. The chain is GRB2-associated and regulator of MAPK protein 1 (GAREM1) from Homo sapiens (Human).